We begin with the raw amino-acid sequence, 503 residues long: REST corepressor 2 (503 aa).

The interval Met1–Ser62 is disordered. Residues Ser41–Thr126 form the ELM2 domain. Residues Pro127–Ser178 form the SANT 1 domain. Coiled-coil stretches lie at residues Val182–Lys206 and Gln286–Gly314. The SANT 2 domain maps to Lys327–Asn378. A disordered region spans residues Glu385–Ser503. Residues Thr399 to Pro412 are compositionally biased toward polar residues. A compositionally biased stretch (low complexity) spans Ser423–Ser442.

The protein belongs to the CoREST family.

It is found in the nucleus. Its function is as follows. May act as a component of a corepressor complex that represses transcription. The chain is REST corepressor 2 (rcor2) from Xenopus laevis (African clawed frog).